Consider the following 141-residue polypeptide: Hemoglobin subunit alpha-A (141 aa).

The Globin domain occupies 1 to 141; sequence VLSSHDKSNV…VGTVLTAKYR (141 aa). An O2-binding site is contributed by His58. His87 lines the heme b pocket.

It belongs to the globin family. Heterotetramer of two alpha chains and two beta chains. As to expression, red blood cells.

Functionally, involved in oxygen transport from the lung to the various peripheral tissues. This is Hemoglobin subunit alpha-A (HBAA) from Phoenicopterus ruber (American flamingo).